Consider the following 301-residue polypeptide: Inosose dehydratase (301 aa).

This sequence belongs to the IolE/MocC family. It depends on glutathione as a cofactor. The cofactor is Co(2+). Mn(2+) is required as a cofactor.

It catalyses the reaction scyllo-inosose = 3D-3,5/4-trihydroxycyclohexane-1,2-dione + H2O. The protein operates within polyol metabolism; myo-inositol degradation into acetyl-CoA; acetyl-CoA from myo-inositol: step 2/7. In terms of biological role, catalyzes the dehydration of inosose (2-keto-myo-inositol, 2KMI or 2,4,6/3,5-pentahydroxycyclohexanone) to 3D-(3,5/4)-trihydroxycyclohexane-1,2-dione (D-2,3-diketo-4-deoxy-epi-inositol). The sequence is that of Inosose dehydratase from Lacticaseibacillus casei (strain BL23) (Lactobacillus casei).